The chain runs to 283 residues: Elongation factor Ts (283 aa).

Residues 80–83 (TDFV) form an involved in Mg(2+) ion dislocation from EF-Tu region.

The protein belongs to the EF-Ts family.

The protein localises to the cytoplasm. Functionally, associates with the EF-Tu.GDP complex and induces the exchange of GDP to GTP. It remains bound to the aminoacyl-tRNA.EF-Tu.GTP complex up to the GTP hydrolysis stage on the ribosome. The polypeptide is Elongation factor Ts (Haemophilus influenzae (strain PittEE)).